The primary structure comprises 600 residues: Single-strand DNA endonuclease 1 (600 aa).

The interval 1–97 is N-domain; sequence MGVKYLWDVL…KRRLKARFEI (97 aa). Residues 2 to 97 are XPG-N domain; sequence GVKYLWDVLE…KRRLKARFEI (96 aa). Positions 30, 76, 142, 144, 163, 165, and 215 each coordinate Mg(2+). Positions 130–215 are XPG-I domain; sequence STLGILCLDG…IALALLLGSD (86 aa). 2 I-domain regions span residues 130–218 and 130–219; these read STLG…DYSQ and STLG…YSQG. The segment at 215 to 353 is 5'-3' exonuclease domain; sequence DYSQGVRGLR…ILPKVAERNL (139 aa). Residues 433 to 458 form a disordered region; sequence MAAKKKKPKPKQKQKETSSPTKSSSL. Basic residues predominate over residues 435–444; sequence AKKKKPKPKQ.

It belongs to the XPG/RAD2 endonuclease family. GEN subfamily. The cofactor is Mg(2+).

It localises to the nucleus. In terms of biological role, endonuclease which cleaves flap structures at the junction between single-stranded DNA and double-stranded DNA with a specific cleavage site in the 5' overhang strand exactly one nucleotide 3' of the branch point. Structure- and sequence-specific nuclease that resolves holliday junctions (HJs) by symmetrically oriented incisions in two opposing strands near the junction point, thus leading to ligatable products; HJs are physical links between homologous DNA molecules that arise as central intermediary structures during homologous recombination and repair in meiotic and somatic cells. Structure-specific nuclease with 5'-flap endonuclease activity, preferentially cleaving static flaps 5' overhang strand exactly one nucleotide in the 3' direction of the branch point and, to lower extent, on the two neighboring positions. Also able to cleave double-stranded flap strand 1 one nucleotide in the 3' direction of the branch point. Together with MUS81, essential for the resolution of toxic replication structures to ensure genome stability, and to maintain telomere integrity and replication. The protein is Single-strand DNA endonuclease 1 of Arabidopsis thaliana (Mouse-ear cress).